The sequence spans 458 residues: MSLPTYSKLNIVILAAGKGTRMNSSKPKVLHALAGKPVLQHVLDTARRLNPSSIIVVYGFGGEIVPQALPADDIIWVKQAEQLGTGHAMQQALPYLEPDARTLILLGDVPLLTQESCTQLLTQQAALCLLTVSKDNPSGYGRIVRQGDAVKAIVEHKDAAEAQLAIREVNTGIMAAENTWLATWLPRLDNRNAQQEYYLTDIVAMAVADGQAVAAVQSNDEWQVAGINSKQDLAALERVYQGRYAARLLAKGVTLADPSRIDVRGELTTGRDVEIDVGCVFEGQVTLADNVRIGPYCVIRDATIGAGTTLAAYTHIDGATLAEDCRIGPYARLRPGTVLSDHAHIGNFVELKNAQVDSGSKINHLSYVGDATVGKQVNIGAGTITCNYDGVNKFRTVIEDNAFIGSDSQLVAPVTIKAGATIAAGSTITEDAPADKLTMSRVRQFTIENWKRPEKVKK.

Positions Met-1–Lys-230 are pyrophosphorylase. UDP-N-acetyl-alpha-D-glucosamine is bound by residues Leu-14–Gly-17, Lys-28, Gln-79, and Gly-84–Thr-85. Residue Asp-108 participates in Mg(2+) binding. UDP-N-acetyl-alpha-D-glucosamine is bound by residues Gly-141, Glu-155, Asn-170, and Asn-228. Asn-228 lines the Mg(2+) pocket. Residues Gln-231–Lys-251 form a linker region. The segment at Gly-252 to Lys-458 is N-acetyltransferase. Arg-334 and Lys-352 together coordinate UDP-N-acetyl-alpha-D-glucosamine. His-364 serves as the catalytic Proton acceptor. The UDP-N-acetyl-alpha-D-glucosamine site is built by Tyr-367 and Asn-378. Acetyl-CoA is bound by residues Ala-381, Asn-387–Tyr-388, Ser-406, Ala-424, and Arg-441.

The protein in the N-terminal section; belongs to the N-acetylglucosamine-1-phosphate uridyltransferase family. In the C-terminal section; belongs to the transferase hexapeptide repeat family. Homotrimer. The cofactor is Mg(2+).

It is found in the cytoplasm. The enzyme catalyses alpha-D-glucosamine 1-phosphate + acetyl-CoA = N-acetyl-alpha-D-glucosamine 1-phosphate + CoA + H(+). The catalysed reaction is N-acetyl-alpha-D-glucosamine 1-phosphate + UTP + H(+) = UDP-N-acetyl-alpha-D-glucosamine + diphosphate. It functions in the pathway nucleotide-sugar biosynthesis; UDP-N-acetyl-alpha-D-glucosamine biosynthesis; N-acetyl-alpha-D-glucosamine 1-phosphate from alpha-D-glucosamine 6-phosphate (route II): step 2/2. The protein operates within nucleotide-sugar biosynthesis; UDP-N-acetyl-alpha-D-glucosamine biosynthesis; UDP-N-acetyl-alpha-D-glucosamine from N-acetyl-alpha-D-glucosamine 1-phosphate: step 1/1. Its pathway is bacterial outer membrane biogenesis; LPS lipid A biosynthesis. Catalyzes the last two sequential reactions in the de novo biosynthetic pathway for UDP-N-acetylglucosamine (UDP-GlcNAc). The C-terminal domain catalyzes the transfer of acetyl group from acetyl coenzyme A to glucosamine-1-phosphate (GlcN-1-P) to produce N-acetylglucosamine-1-phosphate (GlcNAc-1-P), which is converted into UDP-GlcNAc by the transfer of uridine 5-monophosphate (from uridine 5-triphosphate), a reaction catalyzed by the N-terminal domain. In Methylobacillus flagellatus (strain ATCC 51484 / DSM 6875 / VKM B-1610 / KT), this protein is Bifunctional protein GlmU.